Reading from the N-terminus, the 413-residue chain is Multifunctional CCA protein (413 aa).

G8 and R11 together coordinate ATP. Positions 8 and 11 each coordinate CTP. D21 and D23 together coordinate Mg(2+). ATP-binding residues include R91, R137, and R140. Residues R91, R137, and R140 each contribute to the CTP site. The region spanning 228–329 (TGVHTLMTLS…VKLFDAIDAW (102 aa)) is the HD domain.

This sequence belongs to the tRNA nucleotidyltransferase/poly(A) polymerase family. Bacterial CCA-adding enzyme type 1 subfamily. In terms of assembly, monomer. Can also form homodimers and oligomers. Requires Mg(2+) as cofactor. Ni(2+) is required as a cofactor.

The enzyme catalyses a tRNA precursor + 2 CTP + ATP = a tRNA with a 3' CCA end + 3 diphosphate. It carries out the reaction a tRNA with a 3' CCA end + 2 CTP + ATP = a tRNA with a 3' CCACCA end + 3 diphosphate. Its function is as follows. Catalyzes the addition and repair of the essential 3'-terminal CCA sequence in tRNAs without using a nucleic acid template. Adds these three nucleotides in the order of C, C, and A to the tRNA nucleotide-73, using CTP and ATP as substrates and producing inorganic pyrophosphate. tRNA 3'-terminal CCA addition is required both for tRNA processing and repair. Also involved in tRNA surveillance by mediating tandem CCA addition to generate a CCACCA at the 3' terminus of unstable tRNAs. While stable tRNAs receive only 3'-terminal CCA, unstable tRNAs are marked with CCACCA and rapidly degraded. The polypeptide is Multifunctional CCA protein (Salmonella agona (strain SL483)).